Consider the following 955-residue polypeptide: Calsyntenin-2 (955 aa).

The first 20 residues, 1 to 20 (MLPGRLCWVPLLLALGVGSG), serve as a signal peptide directing secretion. The Extracellular segment spans residues 21 to 831 (SGGGGDSRQR…SIQHSSVVPS (811 aa)). Cadherin domains are found at residues 44–160 (IETS…APTF) and 161–280 (KEPA…MPLF). Residues asparagine 56 and asparagine 98 are each glycosylated (N-linked (GlcNAc...) asparagine). Asparagine 342, asparagine 374, asparagine 716, and asparagine 729 each carry an N-linked (GlcNAc...) asparagine glycan. A helical transmembrane segment spans residues 832–852 (IATVVIIISVCMLVFVVAMGV). Residues 853 to 955 (YRVRIAHQHF…LEWDDSTLPY (103 aa)) lie on the Cytoplasmic side of the membrane. The disordered stretch occupies residues 887–955 (PMEKHEGPGH…LEWDDSTLPY (69 aa)). Residues 888 to 898 (MEKHEGPGHGE) show a composition bias toward basic and acidic residues. Composition is skewed to acidic residues over residues 899–913 (DETEGEEEEEAEEEM) and 920–929 (DDSEEEEEEE).

This sequence belongs to the calsyntenin family. Post-translationally, proteolytically processed under normal cellular conditions. A primary zeta-cleavage generates a large extracellular (soluble) N-terminal domain (sAlc) and a short C-terminal transmembrane fragment (CTF1). A secondary cleavage catalyzed by gamma-secretase within the transmembrane domain releases the beta-Alc-gamma chain in the extracellular milieu and produces an intracellular fragment (AlcICD). This processing is strongly suppressed in the tripartite complex formed with APBA2 and APP, which seems to prevent the association with PSEN1. Restricted to the brain.

It localises to the postsynaptic cell membrane. Its subcellular location is the endoplasmic reticulum membrane. The protein resides in the golgi apparatus membrane. The protein localises to the cell projection. It is found in the dendrite. In terms of biological role, postsynaptic adhesion molecule that binds to presynaptic neurexins to mediate synapse formation, and which is involved in learning and memory. Promotes synapse development by acting as a cell adhesion molecule at the postsynaptic membrane, which associates with neurexin-alpha at the presynaptic membrane. The polypeptide is Calsyntenin-2 (Homo sapiens (Human)).